The sequence spans 200 residues: Imidazole glycerol phosphate synthase subunit HisH (200 aa).

In terms of domain architecture, Glutamine amidotransferase type-1 spans 3 to 200 (DVALIDAGGA…LRNFLEMSFP (198 aa)). Residue cysteine 78 is the Nucleophile of the active site. Active-site residues include histidine 179 and glutamate 181.

In terms of assembly, heterodimer of HisH and HisF.

Its subcellular location is the cytoplasm. It carries out the reaction 5-[(5-phospho-1-deoxy-D-ribulos-1-ylimino)methylamino]-1-(5-phospho-beta-D-ribosyl)imidazole-4-carboxamide + L-glutamine = D-erythro-1-(imidazol-4-yl)glycerol 3-phosphate + 5-amino-1-(5-phospho-beta-D-ribosyl)imidazole-4-carboxamide + L-glutamate + H(+). The enzyme catalyses L-glutamine + H2O = L-glutamate + NH4(+). It participates in amino-acid biosynthesis; L-histidine biosynthesis; L-histidine from 5-phospho-alpha-D-ribose 1-diphosphate: step 5/9. Its function is as follows. IGPS catalyzes the conversion of PRFAR and glutamine to IGP, AICAR and glutamate. The HisH subunit catalyzes the hydrolysis of glutamine to glutamate and ammonia as part of the synthesis of IGP and AICAR. The resulting ammonia molecule is channeled to the active site of HisF. The polypeptide is Imidazole glycerol phosphate synthase subunit HisH (Xanthomonas axonopodis pv. citri (strain 306)).